The sequence spans 335 residues: Methyltransferase pgmE (335 aa).

This sequence belongs to the methyltransferase superfamily.

It participates in pigment biosynthesis. Its pathway is secondary metabolite biosynthesis. In terms of biological role, methyltransferase; part of the gene cluster that mediates the biosynthesis of pleosporalin A, ascomycone A, as well as a third cryptic naphthoquinone derived pigment, all responsible for the coloration of conidia. Essential for the production of pleosporalin A, but not the 2 other final products. The pathway begins with the biosynthesis of the cyclized heptaketide 3-acetonyl-1,6,8-trihydroxy-2-naphthaldehyde by the NR-PKS pgmA. The C-6 hydroxyl group is further methylated by the O-methyltransferase pgmB to yield fusarubinaldehyde which is in turn oxidized by the cytochrome P450 monooxygenase pgmC at C-9. The C-1 hydroxyl group is then methylated spontaneously. Although pgmE, pgmD and pgmH are essential for the production of pleosporalin A, it is not the case for the 2 other final products and it remains difficult to assign a specific function to each enzyme. PgmF and pgmG seem not to be involved in pigment biosynthesis although they were regulated by the cluster-specific transcription factor pgmR. The chain is Methyltransferase pgmE from Aspergillus terreus (strain NIH 2624 / FGSC A1156).